The chain runs to 174 residues: Superoxide dismutase [Cu-Zn] (174 aa).

The N-terminal stretch at 1–23 is a signal peptide; it reads MIRLSAAAALGLAAALAASPALA. Cu cation contacts are provided by His-68, His-70, and His-86. Cys-75 and Cys-170 are joined by a disulfide. The Zn(2+) site is built by His-86, His-95, Asp-104, and Asp-107. Cu cation is bound at residue His-150.

This sequence belongs to the Cu-Zn superoxide dismutase family. Homodimer. Cu cation is required as a cofactor. It depends on Zn(2+) as a cofactor.

It is found in the periplasm. The catalysed reaction is 2 superoxide + 2 H(+) = H2O2 + O2. Its function is as follows. Destroys radicals which are normally produced within the cells and which are toxic to biological systems. May function against extracytoplasmic toxic oxygen species. This Caulobacter vibrioides (strain ATCC 19089 / CIP 103742 / CB 15) (Caulobacter crescentus) protein is Superoxide dismutase [Cu-Zn] (sodC).